The primary structure comprises 189 residues: S-protein homolog 26 (189 aa).

Residues 1–25 (MISMNRLSILLFVFAFGLTMMSNTA) form the signal peptide.

Belongs to the plant self-incompatibility (S1) protein family.

Its subcellular location is the secreted. The sequence is that of S-protein homolog 26 from Arabidopsis thaliana (Mouse-ear cress).